The chain runs to 259 residues: Putative zinc metalloprotease Rip2 (259 aa).

The next 2 helical transmembrane spans lie at 14–34 (PIFL…WLAG) and 39–59 (PLAY…SLCL). Zn(2+) is bound at residue H60. E61 is a catalytic residue. H64 lines the Zn(2+) pocket. A run of 4 helical transmembrane segments spans residues 97–117 (GLPM…AVYV), 128–148 (TLVS…LLAA), 156–176 (IHAV…TALV), and 215–235 (LVLF…YWLF).

Belongs to the peptidase M50B family. Requires Zn(2+) as cofactor.

It is found in the cell membrane. The sequence is that of Putative zinc metalloprotease Rip2 (rip2) from Mycobacterium tuberculosis (strain ATCC 35801 / TMC 107 / Erdman).